The sequence spans 96 residues: Phosphoribosyl-ATP pyrophosphatase (96 aa).

This sequence belongs to the PRA-PH family.

The protein localises to the cytoplasm. The enzyme catalyses 1-(5-phospho-beta-D-ribosyl)-ATP + H2O = 1-(5-phospho-beta-D-ribosyl)-5'-AMP + diphosphate + H(+). It participates in amino-acid biosynthesis; L-histidine biosynthesis; L-histidine from 5-phospho-alpha-D-ribose 1-diphosphate: step 2/9. The chain is Phosphoribosyl-ATP pyrophosphatase from Methanococcus maripaludis (strain C6 / ATCC BAA-1332).